The primary structure comprises 434 residues: V-type ATP synthase beta chain (434 aa).

The protein belongs to the ATPase alpha/beta chains family.

Produces ATP from ADP in the presence of a proton gradient across the membrane. The V-type beta chain is a regulatory subunit. In Borrelia garinii subsp. bavariensis (strain ATCC BAA-2496 / DSM 23469 / PBi) (Borreliella bavariensis), this protein is V-type ATP synthase beta chain.